We begin with the raw amino-acid sequence, 418 residues long: Serine hydroxymethyltransferase (418 aa).

Residues L121 and 125–127 contribute to the (6S)-5,6,7,8-tetrahydrofolate site; that span reads GHL. K230 is subject to N6-(pyridoxal phosphate)lysine. Residues E246 and 355 to 357 contribute to the (6S)-5,6,7,8-tetrahydrofolate site; that span reads SPF.

The protein belongs to the SHMT family. Homodimer. Requires pyridoxal 5'-phosphate as cofactor.

It localises to the cytoplasm. The catalysed reaction is (6R)-5,10-methylene-5,6,7,8-tetrahydrofolate + glycine + H2O = (6S)-5,6,7,8-tetrahydrofolate + L-serine. It functions in the pathway one-carbon metabolism; tetrahydrofolate interconversion. The protein operates within amino-acid biosynthesis; glycine biosynthesis; glycine from L-serine: step 1/1. Catalyzes the reversible interconversion of serine and glycine with tetrahydrofolate (THF) serving as the one-carbon carrier. This reaction serves as the major source of one-carbon groups required for the biosynthesis of purines, thymidylate, methionine, and other important biomolecules. Also exhibits THF-independent aldolase activity toward beta-hydroxyamino acids, producing glycine and aldehydes, via a retro-aldol mechanism. The protein is Serine hydroxymethyltransferase of Streptococcus pneumoniae serotype 4 (strain ATCC BAA-334 / TIGR4).